A 213-amino-acid chain; its full sequence is Probable nicotinate-nucleotide adenylyltransferase (213 aa).

It belongs to the NadD family.

The enzyme catalyses nicotinate beta-D-ribonucleotide + ATP + H(+) = deamido-NAD(+) + diphosphate. The protein operates within cofactor biosynthesis; NAD(+) biosynthesis; deamido-NAD(+) from nicotinate D-ribonucleotide: step 1/1. Functionally, catalyzes the reversible adenylation of nicotinate mononucleotide (NaMN) to nicotinic acid adenine dinucleotide (NaAD). In Citrobacter koseri (strain ATCC BAA-895 / CDC 4225-83 / SGSC4696), this protein is Probable nicotinate-nucleotide adenylyltransferase.